The chain runs to 732 residues: MDKDSKRPVVGSTVRGGMSNRDWWPNQLNLSILHQQSNKSNPMGEDFDYAKEFKKLNLAAVKKDLYALMTDSQEWWPADYGHYGGLFIRMAWHSAGTYRMGDGRGGAGSGSQRLAPLNSWPDNANLDKARRLLWPIKKKYGKRISWADLMVLAGNCALESMGFKTFGFAGGREDVWEPETDIYWGAEEEWLATSDKPKSRYSGDRDLENPLAAVQMGLIYVNPEGPDGNPDPVAAGYDVIETFARMAMDPEETVALVAGGHTFGKCHGAGPASHVGPEPEAAPIEAQGLGWKSSFGTGKGGDTITSGIEGAWKPYPTRWDMGYLKVLFKYEWELVKSPAGAYQWLAMDVDEEDMVIDAHDPSKKHRPMMTTADLSLRFDPVLGPIAKRFSKNPKAFADAFARAWFKLTHRDMGPRSRYLGPEVPKKELIWQDPVPAVNHKLIGARDIAALKREILASGLSVSQLVYTAWSSAVTFRGSDKRGGANGARIRLAPQKEWEVNQPAQLKKVLAKLEKIRRAFNSAQSDGKKVSLADLIVLGGCAAIEQAARNAGYKGTVPFKPGRMDATQKQTDAASFAVLEPLADGFRNYLKAKFTVSAEELLIDKARLLTLTAPEMTVLIGGMRVLNANYGQSPHGVFTKRPETLTNDFFVNLLDMGTVWNPAKADDCVFEGRDRQTGALRWTGTRVDLLFGSNSQLRAIAEVYACKDAGEKFVNDFVAVWNKVMNADRFDLA.

The segment at 1–20 is disordered; that stretch reads MDKDSKRPVVGSTVRGGMSN. The tryptophyl-tyrosyl-methioninium (Trp-Tyr) (with M-246) cross-link spans 92-220; sequence WHSAGTYRMG…LAAVQMGLIY (129 aa). Residue His-93 is the Proton acceptor of the active site. A cross-link (tryptophyl-tyrosyl-methioninium (Tyr-Met) (with W-92)) is located at residues 220 to 246; sequence YVNPEGPDGNPDPVAAGYDVIETFARM. Residue His-261 participates in heme b binding.

This sequence belongs to the peroxidase family. Peroxidase/catalase subfamily. As to quaternary structure, homodimer or homotetramer. Heme b is required as a cofactor. Formation of the three residue Trp-Tyr-Met cross-link is important for the catalase, but not the peroxidase activity of the enzyme.

The catalysed reaction is H2O2 + AH2 = A + 2 H2O. It carries out the reaction 2 H2O2 = O2 + 2 H2O. Functionally, bifunctional enzyme with both catalase and broad-spectrum peroxidase activity. This Desulfosudis oleivorans (strain DSM 6200 / JCM 39069 / Hxd3) (Desulfococcus oleovorans) protein is Catalase-peroxidase.